A 284-amino-acid polypeptide reads, in one-letter code: 2-dehydro-3-deoxyphosphooctonate aldolase (284 aa).

This sequence belongs to the KdsA family.

It is found in the cytoplasm. The enzyme catalyses D-arabinose 5-phosphate + phosphoenolpyruvate + H2O = 3-deoxy-alpha-D-manno-2-octulosonate-8-phosphate + phosphate. Its pathway is carbohydrate biosynthesis; 3-deoxy-D-manno-octulosonate biosynthesis; 3-deoxy-D-manno-octulosonate from D-ribulose 5-phosphate: step 2/3. The protein operates within bacterial outer membrane biogenesis; lipopolysaccharide biosynthesis. This chain is 2-dehydro-3-deoxyphosphooctonate aldolase, found in Yersinia pseudotuberculosis serotype O:1b (strain IP 31758).